Consider the following 293-residue polypeptide: Tumor necrosis factor receptor type 1-associated DEATH domain protein (293 aa).

The Nuclear export signal signature appears at 156-171 (LRDDEVTQLEQQLQNS). A Death domain is found at 200 to 290 (TPADQQRFAA…SMAEIMLGIQ (91 aa)). The short motif at 216-229 (KRVGRALQKNCRAL) is the Nuclear localization signal element.

As to quaternary structure, heterodimer with tnfrsf1a.

It is found in the nucleus. The protein localises to the cytoplasm. Its subcellular location is the cytoskeleton. In terms of biological role, adapter molecule for tnfrsf1a that specifically associates with the cytoplasmic domain of activated tnfrsf1a mediating its interaction with fadd. The polypeptide is Tumor necrosis factor receptor type 1-associated DEATH domain protein (Danio rerio (Zebrafish)).